The primary structure comprises 662 residues: PAN2-PAN3 deadenylation complex subunit PAN3 (662 aa).

Disordered stretches follow at residues 1-26 (MASAGKPTLDDSRRATGSPKMKAREN) and 59-131 (TTYQ…RAET). The segment at 26–55 (NAKDTLCRNVTIYGRCRYEDKGCAFNHDPH) adopts a C3H1-type zinc-finger fold. Positions 72 to 85 (DSPSFTPSLLSSNG) are enriched in polar residues. Residues 86-102 (SSPTTASVTAKKAATIS) show a composition bias toward low complexity. Polar residues predominate over residues 114 to 126 (RNITSRSNTSTPS). A pseudokinase domain region spans residues 265 to 525 (QTLPNTQLPA…NIDIFITGIS (261 aa)). ATP-binding positions include R317, 366-373 (DYHPLSKT), and 425-426 (SK). Residues 526–564 (SQLMSTFDSALHLDDELTSDLSRELENGRLVRLVTKLNF) adopt a coiled-coil conformation. Residues 565–662 (VNERPEYEHD…ALLKPTRRLH (98 aa)) are knob domain.

The protein belongs to the protein kinase superfamily. PAN3 family. Homodimer. Forms a heterotrimer with a catalytic subunit pan2 to form the poly(A)-nuclease (PAN) deadenylation complex. Interacts (via PAM-2 motif) with poly(A)-binding protein pab1 (via PABC domain), conferring substrate specificity of the enzyme complex.

It is found in the cytoplasm. Regulatory subunit of the poly(A)-nuclease (PAN) deadenylation complex, one of two cytoplasmic mRNA deadenylases involved in mRNA turnover. PAN specifically shortens poly(A) tails of RNA and the activity is stimulated by poly(A)-binding protein pab1. PAN deadenylation is followed by rapid degradation of the shortened mRNA tails by the CCR4-NOT complex. Deadenylated mRNAs are then degraded by two alternative mechanisms, namely exosome-mediated 3'-5' exonucleolytic degradation, or deadenylation-dependent mRNA decaping and subsequent 5'-3' exonucleolytic degradation by xrn1. May also be involved in post-transcriptional maturation of mRNA poly(A) tails. pan3 acts as a positive regulator for PAN activity, recruiting the catalytic subunit pan2 to mRNA via its interaction with RNA and with pab1. This chain is PAN2-PAN3 deadenylation complex subunit PAN3, found in Aspergillus oryzae (strain ATCC 42149 / RIB 40) (Yellow koji mold).